The sequence spans 383 residues: Spermidine/putrescine import ATP-binding protein PotA (383 aa).

The ABC transporter domain occupies 12-246; it reads IALRDISKVY…PSTPFVAGFI (235 aa). ATP is bound at residue 48–55; that stretch reads GPSGCGKT.

The protein belongs to the ABC transporter superfamily. Spermidine/putrescine importer (TC 3.A.1.11.1) family. As to quaternary structure, the complex is composed of two ATP-binding proteins (PotA), two transmembrane proteins (PotB and PotC) and a solute-binding protein (PotD).

The protein localises to the cell membrane. The enzyme catalyses ATP + H2O + polyamine-[polyamine-binding protein]Side 1 = ADP + phosphate + polyamineSide 2 + [polyamine-binding protein]Side 1.. Part of the ABC transporter complex PotABCD involved in spermidine/putrescine import. Responsible for energy coupling to the transport system. This is Spermidine/putrescine import ATP-binding protein PotA from Acidothermus cellulolyticus (strain ATCC 43068 / DSM 8971 / 11B).